The chain runs to 434 residues: UDP-N-acetylglucosamine 1-carboxyvinyltransferase 1 (434 aa).

A phosphoenolpyruvate-binding site is contributed by 22–23; that stretch reads KN. Arg93 contributes to the UDP-N-acetyl-alpha-D-glucosamine binding site. The active-site Proton donor is Cys117. Cys117 bears the 2-(S-cysteinyl)pyruvic acid O-phosphothioketal mark. UDP-N-acetyl-alpha-D-glucosamine is bound by residues 122 to 126, Asp306, and Val328; that span reads RPIDQ.

This sequence belongs to the EPSP synthase family. MurA subfamily.

Its subcellular location is the cytoplasm. The catalysed reaction is phosphoenolpyruvate + UDP-N-acetyl-alpha-D-glucosamine = UDP-N-acetyl-3-O-(1-carboxyvinyl)-alpha-D-glucosamine + phosphate. It participates in cell wall biogenesis; peptidoglycan biosynthesis. Functionally, cell wall formation. Adds enolpyruvyl to UDP-N-acetylglucosamine. This Bacillus cereus (strain ATCC 14579 / DSM 31 / CCUG 7414 / JCM 2152 / NBRC 15305 / NCIMB 9373 / NCTC 2599 / NRRL B-3711) protein is UDP-N-acetylglucosamine 1-carboxyvinyltransferase 1.